The chain runs to 437 residues: Serine hydroxymethyltransferase 1 (437 aa).

Residues Leu-132 and 136–138 each bind (6S)-5,6,7,8-tetrahydrofolate; that span reads GHL. The residue at position 241 (Lys-241) is an N6-(pyridoxal phosphate)lysine.

Belongs to the SHMT family. In terms of assembly, homodimer. The cofactor is pyridoxal 5'-phosphate.

It localises to the cytoplasm. It catalyses the reaction (6R)-5,10-methylene-5,6,7,8-tetrahydrofolate + glycine + H2O = (6S)-5,6,7,8-tetrahydrofolate + L-serine. It functions in the pathway one-carbon metabolism; tetrahydrofolate interconversion. It participates in amino-acid biosynthesis; glycine biosynthesis; glycine from L-serine: step 1/1. Catalyzes the reversible interconversion of serine and glycine with tetrahydrofolate (THF) serving as the one-carbon carrier. This reaction serves as the major source of one-carbon groups required for the biosynthesis of purines, thymidylate, methionine, and other important biomolecules. Also exhibits THF-independent aldolase activity toward beta-hydroxyamino acids, producing glycine and aldehydes, via a retro-aldol mechanism. This is Serine hydroxymethyltransferase 1 from Mesorhizobium japonicum (strain LMG 29417 / CECT 9101 / MAFF 303099) (Mesorhizobium loti (strain MAFF 303099)).